We begin with the raw amino-acid sequence, 318 residues long: Taste receptor type 2 member 60 (318 aa).

Residues 1 to 7 (MNGDHMV) lie on the Extracellular side of the membrane. The chain crosses the membrane as a helical span at residues 8-28 (LGSSVTDKKAIILVTILLLLR). The Cytoplasmic segment spans residues 29-40 (LVAIAGNGFITA). A helical membrane pass occupies residues 41–61 (ALGVEWVLRRMLLPCDKLLVS). Topologically, residues 62-88 (LGASHFCLQSVVMGKTIYVFLYPMAFP) are extracellular. The helical transmembrane segment at 89-109 (YNPVLQFLAFQWDFLNAATLW) threads the bilayer. Residues 110–128 (FSTWLSVFYCVKIATFTHP) are Cytoplasmic-facing. A helical membrane pass occupies residues 129-149 (VFFWLKHKLSGWLPWMVFSYV). Over 150–183 (GLSSFTTILFFIGNHRMYQNYLKNHLQPWNVTGN) the chain is Extracellular. Residue N179 is glycosylated (N-linked (GlcNAc...) asparagine). A helical transmembrane segment spans residues 184–204 (SIRSYCEKFYLFPLKMITWTM). Topologically, residues 205–234 (PTAVFFICMILLITSLGRHMKKALLTTSGF) are cytoplasmic. A helical transmembrane segment spans residues 235 to 255 (REPSVQAHIKALLALLSFAML). Residues 256-264 (FISYFLSLV) lie on the Extracellular side of the membrane. The chain crosses the membrane as a helical span at residues 265–285 (FSAAGIFPPLDFKFWVWESVI). At 286–318 (YLCAAVHPIILLFSNCRLRAVLKSRRSSRCGTP) the chain is on the cytoplasmic side.

It belongs to the G-protein coupled receptor T2R family.

The protein resides in the membrane. In terms of biological role, receptor that may play a role in the perception of bitterness and is gustducin-linked. May play a role in sensing the chemical composition of the gastrointestinal content. The activity of this receptor may stimulate alpha gustducin, mediate PLC-beta-2 activation and lead to the gating of TRPM5. The chain is Taste receptor type 2 member 60 (TAS2R60) from Pan troglodytes (Chimpanzee).